The primary structure comprises 477 residues: UDP-N-acetylmuramate--L-alanine ligase (477 aa).

115 to 121 is a binding site for ATP; sequence GTHGKTT.

It belongs to the MurCDEF family.

It localises to the cytoplasm. It catalyses the reaction UDP-N-acetyl-alpha-D-muramate + L-alanine + ATP = UDP-N-acetyl-alpha-D-muramoyl-L-alanine + ADP + phosphate + H(+). It participates in cell wall biogenesis; peptidoglycan biosynthesis. Its function is as follows. Cell wall formation. In Gluconobacter oxydans (strain 621H) (Gluconobacter suboxydans), this protein is UDP-N-acetylmuramate--L-alanine ligase.